A 344-amino-acid chain; its full sequence is Arginase 2, chloroplastic/mitochondrial (344 aa).

The N-terminal 26 residues, 1–26, are a transit peptide targeting the chloroplast and mitochondrion; sequence MWKIGQRGVPYFQRLIAAPFTTLRSL. Residues His-163, Asp-187, His-189, and Asp-191 each coordinate Mn(2+). Residues 189-193, 197-199, and Asn-228 contribute to the substrate site; these read HPDIY and EGN. Asp-272 and Asp-274 together coordinate Mn(2+). A substrate-binding site is contributed by Glu-315.

Belongs to the arginase family. The cofactor is Mn(2+). In terms of tissue distribution, expressed in vasculature of roots, root tips, leaves and cotyledons.

The protein resides in the mitochondrion. Its subcellular location is the plastid. It localises to the chloroplast. The enzyme catalyses L-arginine + H2O = urea + L-ornithine. It carries out the reaction agmatine + H2O = urea + putrescine. It participates in nitrogen metabolism; urea cycle; L-ornithine and urea from L-arginine: step 1/1. Its pathway is amine and polyamine biosynthesis; putrescine biosynthesis via agmatine pathway; putrescine from agmatine: step 1/1. Functionally, catalyzes the hydrolysis of L-arginine to urea and L-ornithine. The latter can be utilized in the urea cycle or as a precursor for the synthesis of both polyamines and proline. Possesses agmatinase activity. Catalyzes the formation of putrescine from agmatine. The sequence is that of Arginase 2, chloroplastic/mitochondrial (ARGAH2) from Arabidopsis thaliana (Mouse-ear cress).